The following is a 372-amino-acid chain: Spermidine/putrescine import ATP-binding protein PotA (372 aa).

The region spanning 12 to 242 is the ABC transporter domain; the sequence is IQLKGLNKSF…PTNLFVARFI (231 aa). 44–51 is a binding site for ATP; sequence GPSGCGKT.

This sequence belongs to the ABC transporter superfamily. Spermidine/putrescine importer (TC 3.A.1.11.1) family. The complex is composed of two ATP-binding proteins (PotA), two transmembrane proteins (PotB and PotC) and a solute-binding protein (PotD).

The protein resides in the cell inner membrane. The enzyme catalyses ATP + H2O + polyamine-[polyamine-binding protein]Side 1 = ADP + phosphate + polyamineSide 2 + [polyamine-binding protein]Side 1.. Its function is as follows. Part of the ABC transporter complex PotABCD involved in spermidine/putrescine import. Responsible for energy coupling to the transport system. This Photobacterium profundum (strain SS9) protein is Spermidine/putrescine import ATP-binding protein PotA.